Consider the following 828-residue polypeptide: DNA gyrase subunit A (828 aa).

The 466-residue stretch at 32 to 497 folds into the Topo IIA-type catalytic domain; sequence LPDVRDGLKP…EVLSLEDEDL (466 aa). Tyr120 acts as the O-(5'-phospho-DNA)-tyrosine intermediate in catalysis. Residues 524–530 carry the GyrA-box motif; it reads QKRGGRG.

The protein belongs to the type II topoisomerase GyrA/ParC subunit family. As to quaternary structure, heterotetramer, composed of two GyrA and two GyrB chains. In the heterotetramer, GyrA contains the active site tyrosine that forms a transient covalent intermediate with DNA, while GyrB binds cofactors and catalyzes ATP hydrolysis.

The protein resides in the cytoplasm. It carries out the reaction ATP-dependent breakage, passage and rejoining of double-stranded DNA.. Its function is as follows. A type II topoisomerase that negatively supercoils closed circular double-stranded (ds) DNA in an ATP-dependent manner to modulate DNA topology and maintain chromosomes in an underwound state. Negative supercoiling favors strand separation, and DNA replication, transcription, recombination and repair, all of which involve strand separation. Also able to catalyze the interconversion of other topological isomers of dsDNA rings, including catenanes and knotted rings. Type II topoisomerases break and join 2 DNA strands simultaneously in an ATP-dependent manner. This Streptococcus pyogenes serotype M18 (strain MGAS8232) protein is DNA gyrase subunit A.